The primary structure comprises 542 residues: Exopolysaccharide phosphotransferase CpsY (542 aa).

A disordered region spans residues 522–542 (SPTVSAPLEDGQTANPAQTAR). The span at 533–542 (QTANPAQTAR) shows a compositional bias: polar residues.

Belongs to the stealth family.

The sequence is that of Exopolysaccharide phosphotransferase CpsY (cpsY) from Mycobacterium leprae (strain TN).